Here is a 280-residue protein sequence, read N- to C-terminus: Pantothenate synthetase (280 aa).

Position 31–38 (31–38) interacts with ATP; the sequence is MGNLHVGH. His38 serves as the catalytic Proton donor. Gln62 contacts (R)-pantoate. Residue Gln62 coordinates beta-alanine. Position 150-153 (150-153) interacts with ATP; that stretch reads GKKD. Gln156 serves as a coordination point for (R)-pantoate. Residues Val179 and 187–190 contribute to the ATP site; that span reads MSSR.

Belongs to the pantothenate synthetase family. In terms of assembly, homodimer.

The protein resides in the cytoplasm. It carries out the reaction (R)-pantoate + beta-alanine + ATP = (R)-pantothenate + AMP + diphosphate + H(+). It participates in cofactor biosynthesis; (R)-pantothenate biosynthesis; (R)-pantothenate from (R)-pantoate and beta-alanine: step 1/1. Functionally, catalyzes the condensation of pantoate with beta-alanine in an ATP-dependent reaction via a pantoyl-adenylate intermediate. This is Pantothenate synthetase from Xanthomonas oryzae pv. oryzae (strain KACC10331 / KXO85).